We begin with the raw amino-acid sequence, 47 residues long: Photosystem II reaction center protein K (47 aa).

A propeptide spanning residues 1–10 (MAAFTLDLMA) is cleaved from the precursor. Residues 20–40 (APAVDVLPLIPIFFFLLVFVW) traverse the membrane as a helical segment.

This sequence belongs to the PsbK family. PSII is composed of 1 copy each of membrane proteins PsbA, PsbB, PsbC, PsbD, PsbE, PsbF, PsbH, PsbI, PsbJ, PsbK, PsbL, PsbM, PsbT, PsbX, PsbY, Psb30/Ycf12, peripheral proteins PsbO, CyanoQ (PsbQ), PsbU, PsbV and a large number of cofactors. It forms dimeric complexes.

It localises to the cellular thylakoid membrane. One of the components of the core complex of photosystem II (PSII). PSII is a light-driven water:plastoquinone oxidoreductase that uses light energy to abstract electrons from H(2)O, generating O(2) and a proton gradient subsequently used for ATP formation. It consists of a core antenna complex that captures photons, and an electron transfer chain that converts photonic excitation into a charge separation. This Prochlorococcus marinus (strain MIT 9303) protein is Photosystem II reaction center protein K.